The primary structure comprises 156 residues: Small ribosomal subunit protein uS7 (156 aa).

The protein belongs to the universal ribosomal protein uS7 family. As to quaternary structure, part of the 30S ribosomal subunit. Contacts proteins S9 and S11.

One of the primary rRNA binding proteins, it binds directly to 16S rRNA where it nucleates assembly of the head domain of the 30S subunit. Is located at the subunit interface close to the decoding center, probably blocks exit of the E-site tRNA. The polypeptide is Small ribosomal subunit protein uS7 (Aeromonas salmonicida (strain A449)).